The primary structure comprises 328 residues: Biotin synthase (328 aa).

The region spanning 51 to 282 (FNGNHVDLCS…DKIIRYAGGR (232 aa)) is the Radical SAM core domain. The [4Fe-4S] cluster site is built by Cys-69, Cys-73, and Cys-76. [2Fe-2S] cluster-binding residues include Cys-112, Cys-147, Cys-207, and Arg-277.

The protein belongs to the radical SAM superfamily. Biotin synthase family. Homodimer. [4Fe-4S] cluster is required as a cofactor. [2Fe-2S] cluster serves as cofactor.

It catalyses the reaction (4R,5S)-dethiobiotin + (sulfur carrier)-SH + 2 reduced [2Fe-2S]-[ferredoxin] + 2 S-adenosyl-L-methionine = (sulfur carrier)-H + biotin + 2 5'-deoxyadenosine + 2 L-methionine + 2 oxidized [2Fe-2S]-[ferredoxin]. Its pathway is cofactor biosynthesis; biotin biosynthesis; biotin from 7,8-diaminononanoate: step 2/2. Functionally, catalyzes the conversion of dethiobiotin (DTB) to biotin by the insertion of a sulfur atom into dethiobiotin via a radical-based mechanism. The polypeptide is Biotin synthase (Clostridium acetobutylicum (strain ATCC 824 / DSM 792 / JCM 1419 / IAM 19013 / LMG 5710 / NBRC 13948 / NRRL B-527 / VKM B-1787 / 2291 / W)).